A 432-amino-acid chain; its full sequence is Adenylosuccinate synthetase (432 aa).

GTP is bound by residues 13–19 and 41–43; these read GDEGKGK and GHT. The active-site Proton acceptor is the Asp14. The Mg(2+) site is built by Asp14 and Gly41. IMP contacts are provided by residues 14–17, 39–42, Thr130, Arg144, Gln225, Thr240, and Arg304; these read DEGK and NAGH. His42 (proton donor) is an active-site residue. 300–306 is a binding site for substrate; that stretch reads AVTGRPR. GTP contacts are provided by residues Arg306, 332 to 334, and 415 to 417; these read KLD and STG.

It belongs to the adenylosuccinate synthetase family. As to quaternary structure, homodimer. Mg(2+) is required as a cofactor.

Its subcellular location is the cytoplasm. The catalysed reaction is IMP + L-aspartate + GTP = N(6)-(1,2-dicarboxyethyl)-AMP + GDP + phosphate + 2 H(+). It functions in the pathway purine metabolism; AMP biosynthesis via de novo pathway; AMP from IMP: step 1/2. Plays an important role in the de novo pathway of purine nucleotide biosynthesis. Catalyzes the first committed step in the biosynthesis of AMP from IMP. The protein is Adenylosuccinate synthetase of Glaesserella parasuis serovar 5 (strain SH0165) (Haemophilus parasuis).